Reading from the N-terminus, the 97-residue chain is Co-chaperonin GroES (97 aa).

It belongs to the GroES chaperonin family. As to quaternary structure, heptamer of 7 subunits arranged in a ring. Interacts with the chaperonin GroEL.

The protein localises to the cytoplasm. Functionally, together with the chaperonin GroEL, plays an essential role in assisting protein folding. The GroEL-GroES system forms a nano-cage that allows encapsulation of the non-native substrate proteins and provides a physical environment optimized to promote and accelerate protein folding. GroES binds to the apical surface of the GroEL ring, thereby capping the opening of the GroEL channel. In Stenotrophomonas maltophilia (Pseudomonas maltophilia), this protein is Co-chaperonin GroES.